A 231-amino-acid polypeptide reads, in one-letter code: MAKLTKRQKAIAAKVEAGKQYGFEEAAALLAELSTIKFKESVDIAINLGVDPRKSDQVVRGATVLPNGTGKDVRVAVFTQGPAAEAALAAGADRVGMDELAAEMKGGDLNYDVVIASPDAMRVVGQLGQILGPRGLMPNPKVGTVTPDVASAVKNAKAGQVRFRTDKNGIIHASVGKIDFEPIKLKQNVEALLSDLKRLKPSTSKGIYVKRVTLSSTMGPGLVIDQASLEA.

Belongs to the universal ribosomal protein uL1 family. Part of the 50S ribosomal subunit.

Binds directly to 23S rRNA. The L1 stalk is quite mobile in the ribosome, and is involved in E site tRNA release. Functionally, protein L1 is also a translational repressor protein, it controls the translation of the L11 operon by binding to its mRNA. This is Large ribosomal subunit protein uL1 from Azotobacter vinelandii (strain DJ / ATCC BAA-1303).